We begin with the raw amino-acid sequence, 515 residues long: Probable cytosol aminopeptidase (515 aa).

Lys277 and Asp282 together coordinate Mn(2+). Lys289 is an active-site residue. Asp300, Asp359, and Glu361 together coordinate Mn(2+). Arg363 is a catalytic residue.

It belongs to the peptidase M17 family. Mn(2+) is required as a cofactor.

The protein localises to the cytoplasm. The catalysed reaction is Release of an N-terminal amino acid, Xaa-|-Yaa-, in which Xaa is preferably Leu, but may be other amino acids including Pro although not Arg or Lys, and Yaa may be Pro. Amino acid amides and methyl esters are also readily hydrolyzed, but rates on arylamides are exceedingly low.. The enzyme catalyses Release of an N-terminal amino acid, preferentially leucine, but not glutamic or aspartic acids.. Functionally, presumably involved in the processing and regular turnover of intracellular proteins. Catalyzes the removal of unsubstituted N-terminal amino acids from various peptides. The polypeptide is Probable cytosol aminopeptidase (Streptomyces griseus subsp. griseus (strain JCM 4626 / CBS 651.72 / NBRC 13350 / KCC S-0626 / ISP 5235)).